A 341-amino-acid polypeptide reads, in one-letter code: Uroporphyrinogen decarboxylase (341 aa).

Substrate-binding positions include 23-27 (RQAGR), Asp73, Tyr148, Ser203, and His318.

The protein belongs to the uroporphyrinogen decarboxylase family. As to quaternary structure, homodimer.

Its subcellular location is the cytoplasm. The catalysed reaction is uroporphyrinogen III + 4 H(+) = coproporphyrinogen III + 4 CO2. The protein operates within porphyrin-containing compound metabolism; protoporphyrin-IX biosynthesis; coproporphyrinogen-III from 5-aminolevulinate: step 4/4. Functionally, catalyzes the decarboxylation of four acetate groups of uroporphyrinogen-III to yield coproporphyrinogen-III. The protein is Uroporphyrinogen decarboxylase of Brucella suis (strain ATCC 23445 / NCTC 10510).